The following is a 1121-amino-acid chain: Transcription factor CSR2 (1121 aa).

3 positions are modified to phosphoserine: Ser23, Ser46, and Ser127. Disordered stretches follow at residues 273–342 (PLHT…RSLP), 513–532 (HTQL…PQKL), 579–600 (LKRN…GLAM), and 837–860 (IPQD…LQTS). A compositionally biased stretch (polar residues) spans 276-310 (TQRTSPSNTARTGNAMDTSNSDRASPASNNNTTDA). Composition is skewed to low complexity over residues 318–329 (NNNPMNNNNSPA), 519–529 (SRPRSSSISSP), and 582–597 (NNSN…SSSG). Ser327 carries the post-translational modification Phosphoserine. The span at 837-846 (IPQDKNHNEV) shows a compositional bias: basic and acidic residues. A Glycyl lysine isopeptide (Lys-Gly) (interchain with G-Cter in ubiquitin) cross-link involves residue Lys841. Residues 847 to 860 (NDTNGNSNTSLQTS) are compositionally biased toward polar residues. Position 987 is a phosphoserine (Ser987). Residues 999-1009 (KTTAVSDSSNG) show a composition bias toward polar residues. 2 disordered regions span residues 999–1022 (KTTA…QARP) and 1075–1121 (TPRY…EISS). The segment covering 1084–1093 (TNTDYNYNDN) has biased composition (low complexity).

This sequence belongs to the CSR2 family. In terms of processing, phosphorylated by CDC28.

It localises to the cytoplasm. The protein localises to the nucleus. Functionally, transcription factor involved in the regulation of fermentation and aerobic oxidation. Acts as a repressor of CYC1, which is involved in electron flow through the mitochondria under aerobic condition. Required for pseudohyphal formation upon nitrogen starvation. May be involved in viability at stationary phase and aging. This is Transcription factor CSR2 (CSR2) from Saccharomyces cerevisiae (strain ATCC 204508 / S288c) (Baker's yeast).